A 327-amino-acid chain; its full sequence is Delta(3,5)-Delta(2,4)-dienoyl-CoA isomerase, mitochondrial (327 aa).

The transit peptide at 1–33 directs the protein to the mitochondrion; the sequence is MATAMTVSSKLLGLLMQQLRGTRQLYFNVSLRS. Substrate contacts are provided by residues 115–119 and Gly173; that span reads SGIDL. Lys230 is subject to N6-succinyllysine. Phosphoserine is present on Ser267. Lys316 is subject to N6-succinyllysine. The short motif at 325-327 is the Microbody targeting signal element; sequence SKL. At Lys326 the chain carries N6-acetyllysine.

The protein belongs to the enoyl-CoA hydratase/isomerase family. As to quaternary structure, homohexamer. In terms of tissue distribution, expressed in heart and liver (at protein level).

It is found in the mitochondrion. Its subcellular location is the peroxisome. It catalyses the reaction (3E,5Z)-octadienoyl-CoA = (2E,4E)-octadienoyl-CoA. It carries out the reaction (3E,5Z,8Z,11Z,14Z)-eicosapentaenoyl-CoA = (2E,4E,8Z,11Z,14Z)-eicosapentaenoyl-CoA. It functions in the pathway lipid metabolism; fatty acid beta-oxidation. Isomerization of 3-trans,5-cis-dienoyl-CoA to 2-trans,4-trans-dienoyl-CoA. The protein is Delta(3,5)-Delta(2,4)-dienoyl-CoA isomerase, mitochondrial of Rattus norvegicus (Rat).